Reading from the N-terminus, the 353-residue chain is Photosystem II protein D1 (353 aa).

Position 2 is an N-acetylthreonine (Thr2). Thr2 is subject to Phosphothreonine. Helical transmembrane passes span 29–46 (YIGW…TATS), 118–133 (HFLL…EWEL), and 142–156 (WIAV…AATA). His118 serves as a coordination point for chlorophyll a. Residue Tyr126 coordinates pheophytin a. [CaMn4O5] cluster-binding residues include Asp170 and Glu189. The chain crosses the membrane as a helical span at residues 197 to 218 (FHMLGVAGVFGGSLFSAMHGSL). His198 provides a ligand contact to chlorophyll a. Residues His215 and 264-265 (SF) each bind a quinone. His215 serves as a coordination point for Fe cation. His272 provides a ligand contact to Fe cation. A helical membrane pass occupies residues 274–288 (FLAAWPVVGIWFTAL). Positions 332, 333, 342, and 344 each coordinate [CaMn4O5] cluster. Positions 345 to 353 (AVEAPSTNG) are excised as a propeptide.

The protein belongs to the reaction center PufL/M/PsbA/D family. PSII is composed of 1 copy each of membrane proteins PsbA, PsbB, PsbC, PsbD, PsbE, PsbF, PsbH, PsbI, PsbJ, PsbK, PsbL, PsbM, PsbT, PsbX, PsbY, PsbZ, Psb30/Ycf12, at least 3 peripheral proteins of the oxygen-evolving complex and a large number of cofactors. It forms dimeric complexes. The D1/D2 heterodimer binds P680, chlorophylls that are the primary electron donor of PSII, and subsequent electron acceptors. It shares a non-heme iron and each subunit binds pheophytin, quinone, additional chlorophylls, carotenoids and lipids. D1 provides most of the ligands for the Mn4-Ca-O5 cluster of the oxygen-evolving complex (OEC). There is also a Cl(-1) ion associated with D1 and D2, which is required for oxygen evolution. The PSII complex binds additional chlorophylls, carotenoids and specific lipids. serves as cofactor. Tyr-161 forms a radical intermediate that is referred to as redox-active TyrZ, YZ or Y-Z. In terms of processing, C-terminally processed by CTPA; processing is essential to allow assembly of the oxygen-evolving complex and thus photosynthetic growth.

It is found in the plastid. Its subcellular location is the chloroplast thylakoid membrane. It carries out the reaction 2 a plastoquinone + 4 hnu + 2 H2O = 2 a plastoquinol + O2. Functionally, photosystem II (PSII) is a light-driven water:plastoquinone oxidoreductase that uses light energy to abstract electrons from H(2)O, generating O(2) and a proton gradient subsequently used for ATP formation. It consists of a core antenna complex that captures photons, and an electron transfer chain that converts photonic excitation into a charge separation. The D1/D2 (PsbA/PsbD) reaction center heterodimer binds P680, the primary electron donor of PSII as well as several subsequent electron acceptors. The polypeptide is Photosystem II protein D1 (Ceratophyllum demersum (Rigid hornwort)).